The chain runs to 1070 residues: DNA-directed RNA polymerase subunit beta (1070 aa).

The protein belongs to the RNA polymerase beta chain family. In terms of assembly, in plastids the minimal PEP RNA polymerase catalytic core is composed of four subunits: alpha, beta, beta', and beta''. When a (nuclear-encoded) sigma factor is associated with the core the holoenzyme is formed, which can initiate transcription.

The protein resides in the plastid. Its subcellular location is the chloroplast. It catalyses the reaction RNA(n) + a ribonucleoside 5'-triphosphate = RNA(n+1) + diphosphate. Its function is as follows. DNA-dependent RNA polymerase catalyzes the transcription of DNA into RNA using the four ribonucleoside triphosphates as substrates. The polypeptide is DNA-directed RNA polymerase subunit beta (Solanum lycopersicum (Tomato)).